Here is a 96-residue protein sequence, read N- to C-terminus: LLNRLPNGLFRVCLDLIINYVSGKIRHSFIRILPGDRVKIEVSPYDSTKGRIIYRLHNKDLKDSFFNFTIPFVGIQFEMKNFKKLIFFQEIDSELR.

One can recognise an S1-like domain in the interval 18 to 57; the sequence is INYVSGKIRHSFIRILPGDRVKIEVSPYDSTKGRIIYRLH.

Belongs to the IF-1 family. Component of the 30S ribosomal translation pre-initiation complex which assembles on the 30S ribosome in the order IF-2 and IF-3, IF-1 and N-formylmethionyl-tRNA(fMet); mRNA recruitment can occur at any time during PIC assembly.

It is found in the plastid. It localises to the chloroplast. Functionally, one of the essential components for the initiation of protein synthesis. Stabilizes the binding of IF-2 and IF-3 on the 30S subunit to which N-formylmethionyl-tRNA(fMet) subsequently binds. Helps modulate mRNA selection, yielding the 30S pre-initiation complex (PIC). Upon addition of the 50S ribosomal subunit IF-1, IF-2 and IF-3 are released leaving the mature 70S translation initiation complex. The chain is Putative translation initiation factor IF-1, chloroplastic (infA) from Nicotiana tabacum (Common tobacco).